Reading from the N-terminus, the 2298-residue chain is Protein Ycf2 (2298 aa).

Residue 1638–1645 coordinates ATP; that stretch reads GSIGTGRS.

This sequence belongs to the Ycf2 family.

Its subcellular location is the plastid. The protein localises to the chloroplast stroma. Probable ATPase of unknown function. Its presence in a non-photosynthetic plant (Epifagus virginiana) and experiments in tobacco indicate that it has an essential function which is probably not related to photosynthesis. This Gossypium barbadense (Sea Island cotton) protein is Protein Ycf2.